The chain runs to 410 residues: Peptidase T (410 aa).

Position 78 (histidine 78) interacts with Zn(2+). Aspartate 80 is a catalytic residue. Aspartate 140 serves as a coordination point for Zn(2+). Glutamate 174 acts as the Proton acceptor in catalysis. Glutamate 175, aspartate 197, and histidine 379 together coordinate Zn(2+).

It belongs to the peptidase M20B family. Zn(2+) is required as a cofactor.

The protein localises to the cytoplasm. It carries out the reaction Release of the N-terminal residue from a tripeptide.. Cleaves the N-terminal amino acid of tripeptides. The sequence is that of Peptidase T from Staphylococcus saprophyticus subsp. saprophyticus (strain ATCC 15305 / DSM 20229 / NCIMB 8711 / NCTC 7292 / S-41).